The chain runs to 319 residues: Ribonucleoside-diphosphate reductase 2 subunit beta (319 aa).

Residues aspartate 67, glutamate 98, and histidine 101 each coordinate Fe cation. Tyrosine 105 is an active-site residue. Fe cation is bound by residues glutamate 158, glutamate 192, and histidine 195.

Belongs to the ribonucleoside diphosphate reductase small chain family. As to quaternary structure, tetramer of two alpha and two beta subunits. Fe cation serves as cofactor.

The enzyme catalyses a 2'-deoxyribonucleoside 5'-diphosphate + [thioredoxin]-disulfide + H2O = a ribonucleoside 5'-diphosphate + [thioredoxin]-dithiol. In terms of biological role, provides the precursors necessary for DNA synthesis. Catalyzes the biosynthesis of deoxyribonucleotides from the corresponding ribonucleotides. R2F contains the tyrosyl radical required for catalysis. This Salmonella typhimurium (strain LT2 / SGSC1412 / ATCC 700720) protein is Ribonucleoside-diphosphate reductase 2 subunit beta (nrdF).